The chain runs to 86 residues: Stage V sporulation protein S (86 aa).

Interferes with sporulation at an early stage. Seems to play a positive role in allowing cells to progress beyond stage V of sporulation. The chain is Stage V sporulation protein S from Bacillus subtilis (strain 168).